Reading from the N-terminus, the 188-residue chain is MGVDIRHNKDRKVRRKEPKSQDIYLRLLVKLYRFLARRTNSTFNQVVLKRLFMSRTNRPPLSLSRMIRKMKLPGRENKTAVVVGTITDDVRILEVPKLKVCALRVSSRARSRILKAGGKILTFDQLALESPKGRGTVLLSGPRKGREVYRHFGKAPGTPHSHTKPYVRSKGRKFERARGRRASRGYKN.

Lysine 119 participates in a covalent cross-link: Glycyl lysine isopeptide (Lys-Gly) (interchain with G-Cter in SUMO2). Phosphoserine is present on serine 130. Positions 150 to 188 (RHFGKAPGTPHSHTKPYVRSKGRKFERARGRRASRGYKN) are disordered. Threonine 158 carries the post-translational modification Phosphothreonine. 2 stretches are compositionally biased toward basic residues: residues 161-171 (SHTKPYVRSKG) and 178-188 (RGRRASRGYKN). Residue lysine 164 forms a Glycyl lysine isopeptide (Lys-Gly) (interchain with G-Cter in SUMO2) linkage.

It belongs to the eukaryotic ribosomal protein eL18 family. Component of the large ribosomal subunit.

It localises to the cytoplasm. The protein localises to the cytosol. It is found in the rough endoplasmic reticulum. Component of the large ribosomal subunit. The ribosome is a large ribonucleoprotein complex responsible for the synthesis of proteins in the cell. The protein is Large ribosomal subunit protein eL18 (Rpl18) of Rattus norvegicus (Rat).